The following is a 293-amino-acid chain: Prohibitin-2 (293 aa).

Residues 21–41 (FGGGFGLLALGGVGLLALSSL) form a helical; Signal-anchor for type II membrane protein membrane-spanning segment. Positions 190 to 235 (GREYAAAIEAKQVAQQEAERARFLVEKALQDKRSIIVKAEGEAQSA) form a coiled coil.

This sequence belongs to the prohibitin family. In terms of assembly, the mitochondrial prohibitin complex consists of two subunits (PHB1 and PHB2), assembled into a membrane-associated ring-shaped supercomplex of approximately 1 mDa.

The protein localises to the mitochondrion inner membrane. It localises to the cytoplasm. It is found in the nucleus. Its subcellular location is the cell membrane. Protein with pleiotropic attributes mediated in a cell-compartment- and tissue-specific manner, which include the plasma membrane-associated cell signaling functions, mitochondrial chaperone, and transcriptional co-regulator of transcription factors and sex steroid hormones in the nucleus. In terms of biological role, in the mitochondria, together with PHB, forms large ring complexes (prohibitin complexes) in the inner mitochondrial membrane (IMM) and functions as a chaperone protein that stabilizes mitochondrial respiratory enzymes and maintains mitochondrial integrity in the IMM, which is required for mitochondrial morphogenesis, neuronal survival, and normal lifespan. Its function is as follows. In the nucleus, serves as transcriptional co-regulator. The chain is Prohibitin-2 (phbB) from Dictyostelium discoideum (Social amoeba).